A 498-amino-acid chain; its full sequence is PHD finger protein 10 (498 aa).

Residues 1–10 (MAAAAGPGAA) are compositionally biased toward low complexity. Residues 1–62 (MAAAAGPGAA…SSRSCETSSQ (62 aa)) form a disordered region. A2 carries the N-acetylalanine modification. Residues S12, S36, and S50 each carry the phosphoserine modification. Positions 89 to 185 (MLQEQVSEYL…HYKEYSQMQQ (97 aa)) are essential to induce neural progenitor proliferation. The interval 89 to 295 (MLQEQVSEYL…PPLDPELPAL (207 aa)) is SAY. A Glycyl lysine isopeptide (Lys-Gly) (interchain with G-Cter in SUMO2) cross-link involves residue K241. Position 270 is a phosphoserine (S270). Positions 285–296 (EPPLDPELPALD) are enriched in low complexity. The interval 285 to 368 (EPPLDPELPA…KRSVLSKSVP (84 aa)) is disordered. The interval 292-334 (LPALDSDGDSDDGEDGRGDEKRKNKGTSDSSSGNVSEGESPPD) is essential to induce neural progenitor proliferation. Residues S297, S301, S327, and S331 each carry the phosphoserine modification. A compositionally biased stretch (polar residues) spans 318–328 (TSDSSSGNVSE). Over residues 345 to 359 (KSKDKAATPRKDGPK) the composition is skewed to basic and acidic residues. The PHD-type 1; degenerate zinc-finger motif lies at 379–436 (ICGICLKGKESNKKGKAESLIHCSQCENSGHPSCLDMTMELVSMIKTYPWQCMECKTC). A Glycyl lysine isopeptide (Lys-Gly) (interchain with G-Cter in SUMO2) cross-link involves residue K385. The PHD-type 2; degenerate zinc-finger motif lies at 438–481 (ICGQPHHEEEMMFCDMCDRGYHTFCVGLGAIPSGRWICDCCQRA).

This sequence belongs to the SAYP family. As to quaternary structure, component of neural progenitors-specific chromatin remodeling complex (npBAF complex) composed of at least, ARID1A/BAF250A or ARID1B/BAF250B, SMARCD1/BAF60A, SMARCD3/BAF60C, SMARCA2/BRM/BAF190B, SMARCA4/BRG1/BAF190A, SMARCB1/BAF47, SMARCC1/BAF155, SMARCE1/BAF57, SMARCC2/BAF170, PHF10/BAF45A, ACTL6A/BAF53A and actin. Interacts with ACTL6A/BAF53A, SMARCA2/BRM/BAF190B, SMARCA4/BRG1/BAF190A and PBRM1/BAF180.

It is found in the nucleus. Functionally, involved in transcription activity regulation by chromatin remodeling. Belongs to the neural progenitors-specific chromatin remodeling complex (npBAF complex) and is required for the proliferation of neural progenitors. During neural development a switch from a stem/progenitor to a post-mitotic chromatin remodeling mechanism occurs as neurons exit the cell cycle and become committed to their adult state. The transition from proliferating neural stem/progenitor cells to post-mitotic neurons requires a switch in subunit composition of the npBAF and nBAF complexes. As neural progenitors exit mitosis and differentiate into neurons, npBAF complexes which contain ACTL6A/BAF53A and PHF10/BAF45A, are exchanged for homologous alternative ACTL6B/BAF53B and DPF1/BAF45B or DPF3/BAF45C subunits in neuron-specific complexes (nBAF). The npBAF complex is essential for the self-renewal/proliferative capacity of the multipotent neural stem cells. The nBAF complex along with CREST plays a role regulating the activity of genes essential for dendrite growth. This is PHD finger protein 10 (PHF10) from Homo sapiens (Human).